The chain runs to 246 residues: Acetoacetate decarboxylase (246 aa).

The active-site Schiff-base intermediate with acetoacetate is the Lys116.

Belongs to the ADC family. Homododecamer.

It carries out the reaction acetoacetate + H(+) = acetone + CO2. In terms of biological role, catalyzes the conversion of acetoacetate to acetone and carbon dioxide. The polypeptide is Acetoacetate decarboxylase (Chromobacterium violaceum (strain ATCC 12472 / DSM 30191 / JCM 1249 / CCUG 213 / NBRC 12614 / NCIMB 9131 / NCTC 9757 / MK)).